We begin with the raw amino-acid sequence, 327 residues long: Delta(3,5)-Delta(2,4)-dienoyl-CoA isomerase, mitochondrial (327 aa).

The N-terminal 33 residues, 1–33 (MATAMTVSSKLLGLLMQQLRGTRQLYFNVSLRS), are a transit peptide targeting the mitochondrion. Substrate contacts are provided by residues 115–119 (SGIDL) and glycine 173. Lysine 230 bears the N6-succinyllysine mark. Position 267 is a phosphoserine (serine 267). Lysine 316 is modified (N6-succinyllysine). Positions 325–327 (SKL) match the Microbody targeting signal motif. Lysine 326 carries the N6-acetyllysine modification.

Belongs to the enoyl-CoA hydratase/isomerase family. As to quaternary structure, homohexamer. Expressed in heart and liver (at protein level).

The protein resides in the mitochondrion. The protein localises to the peroxisome. It catalyses the reaction (3E,5Z)-octadienoyl-CoA = (2E,4E)-octadienoyl-CoA. The catalysed reaction is (3E,5Z,8Z,11Z,14Z)-eicosapentaenoyl-CoA = (2E,4E,8Z,11Z,14Z)-eicosapentaenoyl-CoA. It functions in the pathway lipid metabolism; fatty acid beta-oxidation. Functionally, isomerization of 3-trans,5-cis-dienoyl-CoA to 2-trans,4-trans-dienoyl-CoA. The protein is Delta(3,5)-Delta(2,4)-dienoyl-CoA isomerase, mitochondrial of Rattus norvegicus (Rat).